The chain runs to 100 residues: Large ribosomal subunit protein uL23 (100 aa).

The protein belongs to the universal ribosomal protein uL23 family. As to quaternary structure, part of the 50S ribosomal subunit. Contacts protein L29, and trigger factor when it is bound to the ribosome.

Its function is as follows. One of the early assembly proteins it binds 23S rRNA. One of the proteins that surrounds the polypeptide exit tunnel on the outside of the ribosome. Forms the main docking site for trigger factor binding to the ribosome. This Vibrio cholerae serotype O1 (strain ATCC 39541 / Classical Ogawa 395 / O395) protein is Large ribosomal subunit protein uL23.